A 639-amino-acid chain; its full sequence is Polyphenol oxidase, chloroplastic (639 aa).

Residues 1-101 (MATLSSPTII…EGANYYNTLA (101 aa)) constitute a chloroplast transit peptide. Residues 35–58 (GVRSVNGKVSCQTKNNNGNDENNQ) are disordered. 2 disulfides stabilise this stretch: Cys-111/Cys-127 and Cys-126/Cys-194. The Cu cation site is built by His-193, His-214, His-223, His-354, His-358, and His-388. A cross-link (2'-(S-cysteinyl)-histidine (Cys-His)) is located at residues 197–214 (CDGSYPVLGHNDTRLEVH).

It belongs to the tyrosinase family. Cu(2+) is required as a cofactor.

Its subcellular location is the plastid. The protein localises to the chloroplast thylakoid lumen. It catalyses the reaction 2 catechol + O2 = 2 1,2-benzoquinone + 2 H2O. In terms of biological role, catalyzes the oxidation of mono- and o-diphenols to o-diquinones. The polypeptide is Polyphenol oxidase, chloroplastic (Spinacia oleracea (Spinach)).